Consider the following 360-residue polypeptide: Phosphoserine aminotransferase (360 aa).

An L-glutamate-binding site is contributed by R41. Residues 75–76, W101, T152, D172, and Q195 each bind pyridoxal 5'-phosphate; that span reads GR. K196 is subject to N6-(pyridoxal phosphate)lysine. Residue 237–238 coordinates pyridoxal 5'-phosphate; the sequence is NT.

It belongs to the class-V pyridoxal-phosphate-dependent aminotransferase family. SerC subfamily. In terms of assembly, homodimer. The cofactor is pyridoxal 5'-phosphate.

It is found in the cytoplasm. The enzyme catalyses O-phospho-L-serine + 2-oxoglutarate = 3-phosphooxypyruvate + L-glutamate. It catalyses the reaction 4-(phosphooxy)-L-threonine + 2-oxoglutarate = (R)-3-hydroxy-2-oxo-4-phosphooxybutanoate + L-glutamate. It functions in the pathway amino-acid biosynthesis; L-serine biosynthesis; L-serine from 3-phospho-D-glycerate: step 2/3. Its pathway is cofactor biosynthesis; pyridoxine 5'-phosphate biosynthesis; pyridoxine 5'-phosphate from D-erythrose 4-phosphate: step 3/5. Catalyzes the reversible conversion of 3-phosphohydroxypyruvate to phosphoserine and of 3-hydroxy-2-oxo-4-phosphonooxybutanoate to phosphohydroxythreonine. In Pseudoalteromonas translucida (strain TAC 125), this protein is Phosphoserine aminotransferase.